A 490-amino-acid polypeptide reads, in one-letter code: Betaine aldehyde dehydrogenase (490 aa).

K(+) is bound by residues Thr26, Ile27, and Asp93. Gly150–Trp152 lines the NAD(+) pocket. The Charge relay system role is filled by Lys162. Lys176–Glu179 contacts NAD(+). K(+) is bound at residue Val180. An NAD(+)-binding site is contributed by Gly230–Ser233. Position 246 (Leu246) interacts with K(+). The active-site Proton acceptor is the Glu252. The NAD(+) site is built by Gly254, Cys286, and Glu387. Cys286 acts as the Nucleophile in catalysis. Cys286 carries the cysteine sulfenic acid (-SOH) modification. K(+) is bound by residues Lys457 and Gly460. Glu464 acts as the Charge relay system in catalysis.

It belongs to the aldehyde dehydrogenase family. Dimer of dimers. It depends on K(+) as a cofactor.

It carries out the reaction betaine aldehyde + NAD(+) + H2O = glycine betaine + NADH + 2 H(+). Its pathway is amine and polyamine biosynthesis; betaine biosynthesis via choline pathway; betaine from betaine aldehyde: step 1/1. Functionally, involved in the biosynthesis of the osmoprotectant glycine betaine. Catalyzes the irreversible oxidation of betaine aldehyde to the corresponding acid. This chain is Betaine aldehyde dehydrogenase, found in Escherichia coli O157:H7.